Here is a 202-residue protein sequence, read N- to C-terminus: UPF0301 protein mlr7511 (202 aa).

It belongs to the UPF0301 (AlgH) family.

This chain is UPF0301 protein mlr7511, found in Mesorhizobium japonicum (strain LMG 29417 / CECT 9101 / MAFF 303099) (Mesorhizobium loti (strain MAFF 303099)).